Here is a 209-residue protein sequence, read N- to C-terminus: Orotate phosphoribosyltransferase (209 aa).

5-phospho-alpha-D-ribose 1-diphosphate contacts are provided by residues Arg96, Lys100, His102, and 122–130 (EDLISTGGS). Orotate is bound at residue Ser126.

The protein belongs to the purine/pyrimidine phosphoribosyltransferase family. PyrE subfamily. In terms of assembly, homodimer. Mg(2+) is required as a cofactor.

It carries out the reaction orotidine 5'-phosphate + diphosphate = orotate + 5-phospho-alpha-D-ribose 1-diphosphate. Its pathway is pyrimidine metabolism; UMP biosynthesis via de novo pathway; UMP from orotate: step 1/2. Catalyzes the transfer of a ribosyl phosphate group from 5-phosphoribose 1-diphosphate to orotate, leading to the formation of orotidine monophosphate (OMP). The sequence is that of Orotate phosphoribosyltransferase from Streptococcus gordonii (strain Challis / ATCC 35105 / BCRC 15272 / CH1 / DL1 / V288).